We begin with the raw amino-acid sequence, 160 residues long: Large ribosomal subunit protein bL17 (160 aa).

Residues 128–160 are disordered; the sequence is KKATKTRRSRKRKSADVVVEAAPAEETPKAAEE. Residues 129–140 show a composition bias toward basic residues; that stretch reads KATKTRRSRKRK.

The protein belongs to the bacterial ribosomal protein bL17 family. As to quaternary structure, part of the 50S ribosomal subunit. Contacts protein L32.

This chain is Large ribosomal subunit protein bL17, found in Porphyromonas gingivalis (strain ATCC 33277 / DSM 20709 / CIP 103683 / JCM 12257 / NCTC 11834 / 2561).